The sequence spans 161 residues: MASFTCSSPSSILPIIDTRSGNLRCTFQSQVSCGIQRDDNGRRVWRRRTLTKKDDMLRYKMQRVPFVEEQVRKIREVGKVMTMDIEQLLLREDNRFEFVNSVAAEATEYVDKNRDEYGGSKKAIFHVLSNRVNDLGFDRPEAYVEADPYKPGPGYLLEYYT.

The N-terminal 32 residues, 1–32 (MASFTCSSPSSILPIIDTRSGNLRCTFQSQVS), are a transit peptide targeting the chloroplast.

Component of the transcriptionally active chromosome (TAC) complexes. Interacts with FLN1, PTAC10, PTAC12/HMR/PAP5 and PTAC14. Binds to SL1/MTERF3. As to expression, mostly expressed in leaves, flowers and seedlings, and, to a lower extent, in roots and stems.

It is found in the plastid. The protein localises to the chloroplast. Its function is as follows. Essential for chloroplast development, especially for thylakoid formation. Involved in plastid gene expression, probably by maintaining plastid-encoded RNA polymerase (PEP) activity. In Arabidopsis thaliana (Mouse-ear cress), this protein is Protein PLASTID TRANSCRIPTIONALLY ACTIVE 7.